Reading from the N-terminus, the 321-residue chain is Glucokinase (321 aa).

8-13 (GDVGGT) is an ATP binding site.

The protein belongs to the bacterial glucokinase family.

The protein localises to the cytoplasm. The catalysed reaction is D-glucose + ATP = D-glucose 6-phosphate + ADP + H(+). This chain is Glucokinase, found in Salmonella arizonae (strain ATCC BAA-731 / CDC346-86 / RSK2980).